A 185-amino-acid polypeptide reads, in one-letter code: Neuronal vesicle trafficking-associated protein 1 (185 aa).

Topologically, residues 1-82 (MVKLGNNFAE…ITEGVTERFK (82 aa)) are cytoplasmic. The helical; Signal-anchor for type II membrane protein transmembrane segment at 83 to 103 (VSVLVLFALAFLTCVVFLVVY) threads the bilayer. Over 104–185 (KVYKYDRACP…QETEAAEKSA (82 aa)) the chain is Lumenal. The segment at 129 to 164 (ESYYTEQDSSAREKFYTVINHYNLAKQSITRSVSPW) is required for GRIP1 interaction.

The protein belongs to the NSG family. As to quaternary structure, forms a complex with GRIP1, GRIA2 and STX12; controls the intracellular fate of AMPAR and the endosomal sorting of the GRIA2 subunit toward recycling and membrane targeting. Interacts with GRIP1. Interacts with STX12. Interacts with APP; could regulate APP processing. Interacts with FAM171A1. Widely expressed in brain and spinal cord. Expressed in neurons during maturation and synapse formation.

Its subcellular location is the membrane. It localises to the golgi apparatus. The protein localises to the trans-Golgi network membrane. It is found in the endosome membrane. The protein resides in the cell projection. Its subcellular location is the dendrite. It localises to the early endosome membrane. The protein localises to the late endosome membrane. It is found in the lysosome lumen. The protein resides in the recycling endosome membrane. Its subcellular location is the cytoplasmic vesicle membrane. It localises to the golgi stack membrane. The protein localises to the endosome. It is found in the multivesicular body membrane. The protein resides in the endoplasmic reticulum membrane. Plays a role in the recycling mechanism in neurons of multiple receptors, including AMPAR, APP and L1CAM and acts at the level of early endosomes to promote sorting of receptors toward a recycling pathway. Regulates sorting and recycling of GRIA2 through interaction with GRIP1 and then contributes to the regulation of synaptic transmission and plasticity by affecting the recycling and targeting of AMPA receptors to the synapse. Is required for faithful sorting of L1CAM to axons by facilitating trafficking from somatodendritic early endosome or the recycling endosome. In an other hand, induces apoptosis via the activation of CASP3 in response to DNA damage. The polypeptide is Neuronal vesicle trafficking-associated protein 1 (Rattus norvegicus (Rat)).